We begin with the raw amino-acid sequence, 309 residues long: Methionine synthase (309 aa).

Zn(2+) contacts are provided by histidine 201, cysteine 203, glutamate 224, and cysteine 285.

Belongs to the archaeal MetE family. Zn(2+) serves as cofactor.

Its pathway is amino-acid biosynthesis; L-methionine biosynthesis via de novo pathway. With respect to regulation, is activated by phosphates. Functionally, catalyzes the transfer of a methyl group to L-homocysteine resulting in methionine formation. Can use methylcobalamin and methylcobinamide as methyl donors, but methylcobalamin is not considered to be the physiological substrate. It was proposed that, in vivo, a so-far-unidentified enzyme catalyzes methyltransfer from 5-methyltetrahydromethanopterin (5-CH3-H4MPT) to a corrinoid protein, and that the MetE gene product catalyzes the further transfer to L-homocysteine. Is not active with L-cysteine, coenzyme M, coenzyme B, glutathione or dithiothreitol as substrate. The sequence is that of Methionine synthase from Methanothermobacter marburgensis (strain ATCC BAA-927 / DSM 2133 / JCM 14651 / NBRC 100331 / OCM 82 / Marburg) (Methanobacterium thermoautotrophicum).